Reading from the N-terminus, the 1994-residue chain is Protein-methionine sulfoxide oxidase mical3a (1994 aa).

The interval 2-498 (GDGGVNAVGE…RHLLDTGETR (497 aa)) is monooxygenase domain. FAD contacts are provided by residues Cys-101, 101 to 129 (CGLR…SRNN), Glu-120, Arg-122, Arg-127, Asn-129, and Asp-402. The Calponin-homology (CH) domain occupies 521–627 (IVRSSKLLNW…YLSQFYEMFK (107 aa)). The disordered stretch occupies residues 666-708 (ISRKRNPKDKKEKELDGLGKRRKTSQAGQSEDEELQRANRDDR). Residues 674–684 (DKKEKELDGLG) are compositionally biased toward basic and acidic residues. The 63-residue stretch at 772–834 (DVCFFCRKRV…KPHYCYRLSG (63 aa)) folds into the LIM zinc-binding domain. Disordered stretches follow at residues 843-900 (PAAA…LKGT), 917-1064 (EELE…AEAR), 1176-1263 (SQPV…ELKK), 1281-1476 (LGLT…REEV), 1493-1555 (VEDT…SPEA), and 1598-1747 (KVAW…LRLR). 2 stretches are compositionally biased toward acidic residues: residues 917–926 (EELEEVPEET) and 951–961 (SDMEEEDEDAE). The span at 975–987 (EAVELHAKLKGES) shows a compositional bias: basic and acidic residues. Composition is skewed to acidic residues over residues 1001 to 1037 (GEMD…DPEA) and 1046 to 1060 (PGTE…SDAE). A compositionally biased stretch (polar residues) spans 1200 to 1215 (PTGNPLSPICTQSQPC). Basic and acidic residues-rich tracts occupy residues 1249–1263 (RTNE…ELKK) and 1287–1297 (ERSKTAVEKSI). Composition is skewed to low complexity over residues 1299–1314 (KTPT…YTPE) and 1358–1368 (SSSSGLGLNGS). The span at 1369 to 1389 (VTTSQTAASDSYNNSDSTMLT) shows a compositional bias: polar residues. Residues 1437–1458 (PVSPPQPKQKPVTAPVPTPRTN) show a composition bias toward pro residues. A compositionally biased stretch (basic and acidic residues) spans 1464–1476 (RVKEPNKPRREEV). Over residues 1616 to 1635 (AQKDSAVKALESKKQADTLP) the composition is skewed to basic and acidic residues. The segment covering 1649–1660 (SSVTSSESSTGG) has biased composition (low complexity). Residues 1661-1679 (KSKKRSSLFSPRKNKKEKK) are compositionally biased toward basic residues. Residues 1680–1693 (AKNERLSSTEETPP) show a composition bias toward basic and acidic residues. Over residues 1718-1729 (CPSTPSSSTTGD) the composition is skewed to low complexity. Positions 1730–1746 (SGKKKDSPLDRSSDLRL) are enriched in basic and acidic residues. 2 coiled-coil regions span residues 1796–1855 (EEEL…KALR) and 1894–1960 (QEKN…EQRD). The 167-residue stretch at 1816-1982 (KQEELKRLHR…EKEEDKDLEA (167 aa)) folds into the bMERB domain.

The protein belongs to the Mical family. It depends on FAD as a cofactor.

The protein resides in the cytoplasm. The protein localises to the cytoskeleton. It is found in the nucleus. It catalyses the reaction L-methionyl-[F-actin] + NADPH + O2 + H(+) = L-methionyl-(R)-S-oxide-[F-actin] + NADP(+) + H2O. Its function is as follows. Monooxygenase that promotes depolymerization of F-actin by mediating oxidation of specific methionine residues on actin. Acts by modifying actin subunits through the addition of oxygen to form methionine-sulfoxide, leading to promote actin filament severing and prevent repolymerization. Involved in exocytic vesicles tethering and fusion: the monooxygenase activity is required for this process. This chain is Protein-methionine sulfoxide oxidase mical3a (mical3a), found in Danio rerio (Zebrafish).